The following is a 49-amino-acid chain: Small, acid-soluble spore protein O (49 aa).

The disordered stretch occupies residues 1–49 (MGKRKANHTISGMNAASAQGQGAGYNEEFANENLTPAERQNNKKRKKNQ). Residues 8–20 (HTISGMNAASAQG) show a composition bias toward polar residues.

It belongs to the SspO family.

The protein resides in the spore core. In Bacillus anthracis (strain A0248), this protein is Small, acid-soluble spore protein O.